A 140-amino-acid chain; its full sequence is Large ribosomal subunit protein bL17 (140 aa).

This sequence belongs to the bacterial ribosomal protein bL17 family. Part of the 50S ribosomal subunit. Contacts protein L32.

The sequence is that of Large ribosomal subunit protein bL17 from Roseobacter denitrificans (strain ATCC 33942 / OCh 114) (Erythrobacter sp. (strain OCh 114)).